The chain runs to 105 residues: Small ribosomal subunit protein uS10 (105 aa).

The protein belongs to the universal ribosomal protein uS10 family. Part of the 30S ribosomal subunit.

Its function is as follows. Involved in the binding of tRNA to the ribosomes. This chain is Small ribosomal subunit protein uS10, found in Chlamydia abortus (strain DSM 27085 / S26/3) (Chlamydophila abortus).